We begin with the raw amino-acid sequence, 134 residues long: DNA-binding protein H-NS, plasmid (134 aa).

A coiled-coil region spans residues 23–67 (LEILEELLEKLSVVVEERRQEESSKEAELKARLEKIESLRQLMLE). A disordered region spans residues 77–96 (SSFSAKSGAPKKVREPRPAK). The DNA-binding element occupies 112–117 (QGRTPK).

Belongs to the histone-like protein H-NS family. In terms of assembly, homodimer that oligomerizes on DNA into higher-order complexes that form bridges between disparate regions of DNA compacting it. Interacts with Hha, YdgT and StpA.

It is found in the cytoplasm. It localises to the nucleoid. Functionally, a DNA-binding protein implicated in transcriptional repression and chromosome organization and compaction. Binds DNA, modifying gene expression, especially non-core genes. Does not regulate the same set of genes as its chromosomal counterpart (tested in S.typhimurium strain SL1344 / SV5015, chromosomal H-NS protein is AC A0A0H3NBY9). Thus it has a not-completely overlapping set of gene targets compared to its chromosomal homolog; many of these target genes are either plasmid-encoded or acquired by horizontally transferred genes (HTG). This protein can function in the absence of H-NS-modulating protein Hha (either chromosomal or plasmid-encoded), although many HTG genes are regulated by an H-NS/Hha complex. Binds nucleation sites in AT-rich DNA and bridges them, forming higher-order nucleoprotein complexes and condensing the chromosome. A subset of genes are repressed by H-NS in association with Hha and/or Cnu (ydgT). This Salmonella typhi protein is DNA-binding protein H-NS, plasmid (hns).